Reading from the N-terminus, the 393-residue chain is NAD(P)H-quinone oxidoreductase subunit H, chloroplastic (393 aa).

This sequence belongs to the complex I 49 kDa subunit family. In terms of assembly, NDH is composed of at least 16 different subunits, 5 of which are encoded in the nucleus.

Its subcellular location is the plastid. It localises to the chloroplast thylakoid membrane. The enzyme catalyses a plastoquinone + NADH + (n+1) H(+)(in) = a plastoquinol + NAD(+) + n H(+)(out). The catalysed reaction is a plastoquinone + NADPH + (n+1) H(+)(in) = a plastoquinol + NADP(+) + n H(+)(out). Functionally, NDH shuttles electrons from NAD(P)H:plastoquinone, via FMN and iron-sulfur (Fe-S) centers, to quinones in the photosynthetic chain and possibly in a chloroplast respiratory chain. The immediate electron acceptor for the enzyme in this species is believed to be plastoquinone. Couples the redox reaction to proton translocation, and thus conserves the redox energy in a proton gradient. The chain is NAD(P)H-quinone oxidoreductase subunit H, chloroplastic from Zea mays (Maize).